A 358-amino-acid polypeptide reads, in one-letter code: Aromatic amino acid aminotransferase (358 aa).

Lys-214 carries the N6-(pyridoxal phosphate)lysine modification.

The protein belongs to the class-II pyridoxal-phosphate-dependent aminotransferase family. As to quaternary structure, homodimer. Pyridoxal 5'-phosphate is required as a cofactor.

The catalysed reaction is an aromatic L-alpha-amino acid + 2-oxoglutarate = an aromatic oxo-acid + L-glutamate. Aminotransferase that catalyzes the conversion of aromatic amino acids and 2-oxoglutarate into corresponding aromatic oxo acids and L-glutamate. The protein is Aromatic amino acid aminotransferase of Rhodococcus jostii (strain RHA1).